We begin with the raw amino-acid sequence, 142 residues long: Galactose-6-phosphate isomerase subunit LacA (142 aa).

Belongs to the LacAB/RpiB family. As to quaternary structure, heteromultimeric protein consisting of LacA and LacB.

It carries out the reaction aldehydo-D-galactose 6-phosphate = keto-D-tagatose 6-phosphate. It functions in the pathway carbohydrate metabolism; D-galactose 6-phosphate degradation; D-tagatose 6-phosphate from D-galactose 6-phosphate: step 1/1. The sequence is that of Galactose-6-phosphate isomerase subunit LacA from Streptococcus mutans serotype c (strain ATCC 700610 / UA159).